The sequence spans 226 residues: ATP synthase subunit a (226 aa).

Transmembrane regions (helical) follow at residues 17–37, 79–99, 105–125, 134–154, 176–196, and 199–219; these read FSYF…AMMA, LVAT…IPGF, SLNL…FEGI, FAHF…IEIV, LFLM…AYVL, and FMAF…LAGA.

The protein belongs to the ATPase A chain family. In terms of assembly, F-type ATPases have 2 components, CF(1) - the catalytic core - and CF(0) - the membrane proton channel. CF(1) has five subunits: alpha(3), beta(3), gamma(1), delta(1), epsilon(1). CF(0) has three main subunits: a(1), b(2) and c(9-12). The alpha and beta chains form an alternating ring which encloses part of the gamma chain. CF(1) is attached to CF(0) by a central stalk formed by the gamma and epsilon chains, while a peripheral stalk is formed by the delta and b chains.

It is found in the cell inner membrane. Its function is as follows. Key component of the proton channel; it plays a direct role in the translocation of protons across the membrane. This chain is ATP synthase subunit a, found in Campylobacter jejuni subsp. jejuni serotype O:23/36 (strain 81-176).